The primary structure comprises 426 residues: Phosphomethylpyrimidine synthase (426 aa).

Residues methionine 94, tyrosine 123, histidine 162, 184–186 (SRG), 225–228 (NGMR), and glutamate 264 each bind substrate. Residue histidine 268 participates in Zn(2+) binding. A substrate-binding site is contributed by tyrosine 291. Histidine 332 lines the Zn(2+) pocket. Residues cysteine 406, cysteine 409, and cysteine 413 each coordinate [4Fe-4S] cluster.

This sequence belongs to the ThiC family. The cofactor is [4Fe-4S] cluster.

It carries out the reaction 5-amino-1-(5-phospho-beta-D-ribosyl)imidazole + S-adenosyl-L-methionine = 4-amino-2-methyl-5-(phosphooxymethyl)pyrimidine + CO + 5'-deoxyadenosine + formate + L-methionine + 3 H(+). The protein operates within cofactor biosynthesis; thiamine diphosphate biosynthesis. Catalyzes the synthesis of the hydroxymethylpyrimidine phosphate (HMP-P) moiety of thiamine from aminoimidazole ribotide (AIR) in a radical S-adenosyl-L-methionine (SAM)-dependent reaction. The polypeptide is Phosphomethylpyrimidine synthase (Methanospirillum hungatei JF-1 (strain ATCC 27890 / DSM 864 / NBRC 100397 / JF-1)).